The chain runs to 157 residues: MLVTSSRKPSARTRTLCKLLSRFIAGRCMTRGKMGMQELLEFAEGGPLIVIGEYHGNPGELSFYDEAGELLFSLRFTDWYSKELDSYWFSGIEPKLAGQGEIAEAFKVFFHFQRVENDKIDQLPPSSTLIVVGENDIDFMGSGKSLFKLNLRGFKKY.

A Brix domain is found at 1–157; the sequence is MLVTSSRKPS…KLNLRGFKKY (157 aa).

Probably involved in the biogenesis of the ribosome. This chain is Probable Brix domain-containing ribosomal biogenesis protein, found in Methanosarcina barkeri (strain Fusaro / DSM 804).